The chain runs to 419 residues: L-rhamnose isomerase (419 aa).

Residues histidine 262, aspartate 294, and aspartate 296 each contribute to the Mn(2+) site.

The protein belongs to the rhamnose isomerase family. Homotetramer. Requires Mn(2+) as cofactor.

It is found in the cytoplasm. The catalysed reaction is L-rhamnopyranose = L-rhamnulose. It participates in carbohydrate degradation; L-rhamnose degradation; glycerone phosphate from L-rhamnose: step 1/3. Functionally, catalyzes the interconversion of L-rhamnose and L-rhamnulose. This chain is L-rhamnose isomerase, found in Escherichia fergusonii (strain ATCC 35469 / DSM 13698 / CCUG 18766 / IAM 14443 / JCM 21226 / LMG 7866 / NBRC 102419 / NCTC 12128 / CDC 0568-73).